The primary structure comprises 485 residues: Cholesterol 16,22-dihydroxylase CYP90G4 (485 aa).

Residues V4–L24 form a helical membrane-spanning segment. C432 is a binding site for heme.

It belongs to the cytochrome P450 family. Mainly expressed in leaves and, at low levels, in roots and stems.

Its subcellular location is the membrane. The catalysed reaction is cholesterol + 2 reduced [NADPH--hemoprotein reductase] + 2 O2 = (16S,22S)-dihydroxycholesterol + 2 oxidized [NADPH--hemoprotein reductase] + 2 H2O + 2 H(+). The protein operates within steroid metabolism; cholesterol metabolism. Its function is as follows. Involved in the biosynthesis of spiroketal steroid and saponin natural products from cholesterol such as diosgenin and analogs (e.g. furostanol and spirostanol), plant defense compounds used as main precursors for the industrial production of steroid hormones. During the 5,6-spiroketalization of cholesterol, catalyzes the hydroxylation of cholesterol to form 16S,22S-dihydroxycholesterol and, possibly, the subsequent conversion of 16S,22S-dihydroxycholesterol into 16-oxo-22-hydroxy-cholesterol and 16-hydroxy-22-oxo-cholesterol. 16-hydroxy-22-oxo-cholesterol submit a spontaneous reaction leading to the production of furostanol-type steroid diastereomers, precursors of diosgenin. In Paris polyphylla (Daiswa polyphylla), this protein is Cholesterol 16,22-dihydroxylase CYP90G4.